Reading from the N-terminus, the 217-residue chain is Probable cytidylate kinase (217 aa).

9 to 17 (GPAGSGKST) contacts ATP.

The protein belongs to the cytidylate kinase family. Type 1 subfamily.

It carries out the reaction CMP + ATP = CDP + ADP. The catalysed reaction is dCMP + ATP = dCDP + ADP. This Vairimorpha ceranae (strain BRL01) (Microsporidian parasite) protein is Probable cytidylate kinase.